Reading from the N-terminus, the 372-residue chain is Glutamate 5-kinase (372 aa).

Position 14 (Lys14) interacts with ATP. Residues Ser54, Asp141, and Asn153 each coordinate substrate. ATP is bound at residue 173 to 174 (TD). One can recognise a PUA domain in the interval 280–358 (RGTVVIDDGA…SQIESLLGYS (79 aa)).

Belongs to the glutamate 5-kinase family.

The protein resides in the cytoplasm. It carries out the reaction L-glutamate + ATP = L-glutamyl 5-phosphate + ADP. Its pathway is amino-acid biosynthesis; L-proline biosynthesis; L-glutamate 5-semialdehyde from L-glutamate: step 1/2. Catalyzes the transfer of a phosphate group to glutamate to form L-glutamate 5-phosphate. The sequence is that of Glutamate 5-kinase from Methylibium petroleiphilum (strain ATCC BAA-1232 / LMG 22953 / PM1).